Consider the following 426-residue polypeptide: Arrestin domain-containing protein 17 (426 aa).

The span at 320–329 shows a compositional bias: polar residues; the sequence is QSAGNGSLPK. The tract at residues 320–340 is disordered; that stretch reads QSAGNGSLPKSSIKDSPPKWD. The segment covering 331–340 has biased composition (basic and acidic residues); it reads SIKDSPPKWD.

It belongs to the arrestin family. In terms of assembly, interacts with tax-6. In terms of processing, phosphorylated. Dephosphorylated by tax-6 in vitro. Expressed from the comma stage to adulthood in the nervous system, including sensory neurons and interneurons posterior to the nerve ring, dorsal and ventral nerve cords, tail ganglia and, CEP, HSN, ASK, ADL, ASH and ASJ neurons.

Its function is as follows. Involved in several behavioral responses including chemotaxis towards lysine and adaptation to repeated osmotic stress. In addition, plays a role in resuming egg-laying and locomotion after starvation. This Caenorhabditis elegans protein is Arrestin domain-containing protein 17.